The sequence spans 390 residues: Two-component response regulator ORR29 (390 aa).

Residues 13-130 form the Response regulatory domain; it reads SAMVIDEDKC…TIKNLWQYVD (118 aa). D65 carries the 4-aspartylphosphate modification. Residues 169–226 constitute a DNA-binding region (myb-like GARP); it reads KKYYLMWTPHLQKKFLHALQILGKDASPKNIKKIMGVDNIDCRQIAAHLQKHRLRLTK. Disordered regions lie at residues 233-271 and 303-339; these read FTTDTSKDESNSRIGPAESHHVCRNASTLQPRSNTQPTE and SKHSSDPSGDEDEQVVVGGDQDGCANEANDIDSSGDH. Residues 257–271 show a composition bias toward polar residues; sequence NASTLQPRSNTQPTE.

Belongs to the ARR family. Type-B subfamily. In terms of processing, two-component system major event consists of a His-to-Asp phosphorelay between a sensor histidine kinase (HK) and a response regulator (RR). In plants, the His-to-Asp phosphorelay involves an additional intermediate named Histidine-containing phosphotransfer protein (HPt). This multistep phosphorelay consists of a His-Asp-His-Asp sequential transfer of a phosphate group between first a His and an Asp of the HK protein, followed by the transfer to a conserved His of the HPt protein and finally the transfer to an Asp in the receiver domain of the RR protein.

It localises to the cytoplasm. Its subcellular location is the cytosol. The protein localises to the nucleus. In terms of biological role, transcriptional activator that binds specific DNA sequence. Functions as a response regulator involved in His-to-Asp phosphorelay signal transduction system. Phosphorylation of the Asp residue in the receiver domain activates the ability of the protein to promote the transcription of target genes. May directly activate some type-A response regulators in response to cytokinins. Functions as a response regulator in response to cytokinins. The chain is Two-component response regulator ORR29 from Oryza sativa subsp. japonica (Rice).